A 632-amino-acid chain; its full sequence is MQYPKNYDVVVIGGGHAGTEAALAAARMGAQTLLLTHNIETLGQMSCNPAIGGIGKSHLVREIDALGGAMALATDKSGIQFRVLNSRKGAAVRATRAQADRILYKAAIRHTLENQPNLDIFQQAADDILVENGRATAVVTATGIIFNTQTVVLTSGTFLGGVIHIGLESSKGGRAGDQPSIKLADRLRELKLPVGRLKTGTPARIDARSVDFSVMAVQPGDTPLPVMSYMGDVSMHPEQVNCYITHTNARTHDIIRENLDRSPMFSGKIEGVGPRYCPSIEDKIHRFADKDSHQIFIEPEGLTTHELYPNGISTSLPFDVQLEFIHSMKGLENAHITRPGYAIEYDYFDPQNLKPTLETKSIDRLYFAGQINGTTGYEEAGVQGLLAGTNAALVTCENSEFDVWTPRRDEAYLGVLVDDLITHGTTEPYRMFTSRAEYRLLLREDNADQRLTETGRKLGLVDDVRWQAYEEKMEAIASETSRLKDIWATPINALGAQVTAQTGEVLSKESTAYDLLKRPQIHFNDIAAITGSEVDSQVGEQIEISVKYAGYIDRQQEDIDQMKRLENTALPMDFDYSVVSGLSNEIVQKLAQVRPSTLAQAGRISGVTPAAIQLLAMTVKKQKKVQAALNAS.

13–18 provides a ligand contact to FAD; that stretch reads GGGHAG. 273–287 serves as a coordination point for NAD(+); the sequence is GPRYCPSIEDKIHRF.

The protein belongs to the MnmG family. Homodimer. Heterotetramer of two MnmE and two MnmG subunits. FAD serves as cofactor.

It is found in the cytoplasm. Its function is as follows. NAD-binding protein involved in the addition of a carboxymethylaminomethyl (cmnm) group at the wobble position (U34) of certain tRNAs, forming tRNA-cmnm(5)s(2)U34. In Psychrobacter arcticus (strain DSM 17307 / VKM B-2377 / 273-4), this protein is tRNA uridine 5-carboxymethylaminomethyl modification enzyme MnmG.